A 905-amino-acid polypeptide reads, in one-letter code: Cation-transporting ATPase pma1 (905 aa).

A run of 4 helical transmembrane segments spans residues 60–80, 81–101, 248–268, and 283–303; these read FLLQ…TVKA, FLGS…NAII, FSHT…AVGW, and ALAV…TLAI. The active-site 4-aspartylphosphate intermediate is aspartate 333. Transmembrane regions (helical) follow at residues 716 to 736, 774 to 794, 809 to 829, 848 to 868, and 880 to 900; these read ILIS…VLWL, LLHR…GMFE, MAIQ…SQLG, ILLL…QLPF, and WQQW…AILA.

This sequence belongs to the cation transport ATPase (P-type) (TC 3.A.3) family. Type IIA subfamily.

The protein resides in the cell membrane. It catalyses the reaction ATP + H2O = ADP + phosphate + H(+). In terms of biological role, could mediate calcium influx. The protein is Cation-transporting ATPase pma1 (pma1) of Synechocystis sp. (strain ATCC 27184 / PCC 6803 / Kazusa).